The sequence spans 205 residues: Holliday junction branch migration complex subunit RuvA (205 aa).

Residues 1–64 are domain I; the sequence is MIGKLKGVID…EDQIKLFGFR (64 aa). The tract at residues 65–143 is domain II; sequence SDIEREWFRL…AFANVDPAVV (79 aa). The tract at residues 144-154 is flexible linker; sequence HLAGAVDDDRA. The segment at 154 to 205 is domain III; that stretch reads APRPVKDAISALVNLGYGQPQAAAAIASVARDAGEGAETAQLIRLGLKELAK.

It belongs to the RuvA family. In terms of assembly, homotetramer. Forms an RuvA(8)-RuvB(12)-Holliday junction (HJ) complex. HJ DNA is sandwiched between 2 RuvA tetramers; dsDNA enters through RuvA and exits via RuvB. An RuvB hexamer assembles on each DNA strand where it exits the tetramer. Each RuvB hexamer is contacted by two RuvA subunits (via domain III) on 2 adjacent RuvB subunits; this complex drives branch migration. In the full resolvosome a probable DNA-RuvA(4)-RuvB(12)-RuvC(2) complex forms which resolves the HJ.

The protein resides in the cytoplasm. The RuvA-RuvB-RuvC complex processes Holliday junction (HJ) DNA during genetic recombination and DNA repair, while the RuvA-RuvB complex plays an important role in the rescue of blocked DNA replication forks via replication fork reversal (RFR). RuvA specifically binds to HJ cruciform DNA, conferring on it an open structure. The RuvB hexamer acts as an ATP-dependent pump, pulling dsDNA into and through the RuvAB complex. HJ branch migration allows RuvC to scan DNA until it finds its consensus sequence, where it cleaves and resolves the cruciform DNA. The protein is Holliday junction branch migration complex subunit RuvA of Afipia carboxidovorans (strain ATCC 49405 / DSM 1227 / KCTC 32145 / OM5) (Oligotropha carboxidovorans).